We begin with the raw amino-acid sequence, 135 residues long: Large ribosomal subunit protein uL16c (135 aa).

This sequence belongs to the universal ribosomal protein uL16 family. As to quaternary structure, part of the 50S ribosomal subunit.

It is found in the plastid. The protein resides in the chloroplast. The protein is Large ribosomal subunit protein uL16c of Olimarabidopsis pumila (Dwarf rocket).